Reading from the N-terminus, the 110-residue chain is UPF0122 protein lin1916 (110 aa).

It belongs to the UPF0122 family.

Its function is as follows. Might take part in the signal recognition particle (SRP) pathway. This is inferred from the conservation of its genetic proximity to ftsY/ffh. May be a regulatory protein. This is UPF0122 protein lin1916 from Listeria innocua serovar 6a (strain ATCC BAA-680 / CLIP 11262).